Here is a 572-residue protein sequence, read N- to C-terminus: MGCVFGREAATTTTAEAKQAKSSKASSGVVVVGESSVTKSNGVIADDVEKKKNEEANGDKERKSSKGDRRRSTKPNPRLSNPSKHWRGEQVAAGWPSWLSDACGEALNGWVPRKADTFEKIDKIGQGTYSNVYKAKDMLTGKIVALKKVRFDNLEPESVKFMAREILVLRRLDHPNVVKLEGLVTSRMSCSLYLVFQYMDHDLAGLASSPVVKFSESEVKCLMRQLISGLEHCHSRGVLHRDIKGSNLLIDDGGVLKIADFGLATIFDPNHKRPMTSRVVTLWYRAPELLLGATDYGVGIDLWSAGCILAELLAGRPIMPGRTEVEQLHKIYKLCGSPSEDYWKKGKFTHGAIYKPREPYKRSIRETFKDFPPSSLPLIDALLSIEPEDRQTASAALKSEFFTSEPYACEPADLPKYPPSKEIDAKRRDEETRRQRAASKAQGDGARKNRHRDRSNRALPAPEANAELQSNVDRRRLITHANAKSKSEKFPPPHQDGGAMGVPLGASQHIDPTFIPRDMVPSFTSSSFNFSKDEPPTQVQTWSGPLGHPITGVSRKKKDNTKSSKGKRAVVA.

The disordered stretch occupies residues 1-89 (MGCVFGREAA…SNPSKHWRGE (89 aa)). Residues 9–40 (AATTTTAEAKQAKSSKASSGVVVVGESSVTKS) show a composition bias toward low complexity. The span at 47–67 (DVEKKKNEEANGDKERKSSKG) shows a compositional bias: basic and acidic residues. Polar residues predominate over residues 74 to 83 (KPNPRLSNPS). The region spanning 118-402 (FEKIDKIGQG…ASAALKSEFF (285 aa)) is the Protein kinase domain. ATP-binding positions include 124–132 (IGQGTYSNV) and Lys-147. Asp-242 acts as the Proton acceptor in catalysis. Disordered stretches follow at residues 409 to 474 (CEPA…NVDR) and 526 to 572 (SSFN…AVVA). Basic and acidic residues predominate over residues 419–434 (PSKEIDAKRRDEETRR). The segment covering 554–572 (SRKKKDNTKSSKGKRAVVA) has biased composition (basic residues).

The protein belongs to the protein kinase superfamily. Ser/Thr protein kinase family.

The enzyme catalyses L-seryl-[protein] + ATP = O-phospho-L-seryl-[protein] + ADP + H(+). It carries out the reaction L-threonyl-[protein] + ATP = O-phospho-L-threonyl-[protein] + ADP + H(+). This is Probable serine/threonine-protein kinase At1g54610 from Arabidopsis thaliana (Mouse-ear cress).